The sequence spans 239 residues: ATP synthase subunit a, chloroplastic (239 aa).

5 consecutive transmembrane segments (helical) span residues 30-50 (VLLV…LGTF), 87-107 (VPFI…GALV), 126-146 (INTT…AGLS), 191-211 (LVVA…VMVL), and 212-232 (GLFA…SYIG).

The protein belongs to the ATPase A chain family. F-type ATPases have 2 components, CF(1) - the catalytic core - and CF(0) - the membrane proton channel. CF(1) has five subunits: alpha(3), beta(3), gamma(1), delta(1), epsilon(1). CF(0) has four main subunits: a, b, b' and c.

The protein localises to the plastid. It is found in the chloroplast thylakoid membrane. In terms of biological role, key component of the proton channel; it plays a direct role in the translocation of protons across the membrane. In Cyanidium caldarium (Red alga), this protein is ATP synthase subunit a, chloroplastic.